A 614-amino-acid chain; its full sequence is UPF0329 protein ECU03_0090 (614 aa).

Composition is skewed to basic and acidic residues over residues 317 to 338 and 345 to 354; these read EREE…EESL and LRMEEKEKSK. The interval 317-420 is disordered; the sequence is EREEAEKMRG…KKSRSKGHRY (104 aa). Residues 355-364 are compositionally biased toward basic residues; the sequence is SRGKKKKGGK. Residues 372-381 are compositionally biased toward basic and acidic residues; sequence AKMEEEKKDS. Residues 382–394 are compositionally biased toward acidic residues; sequence EEVEESAEAEVSL. Residues 408–420 show a composition bias toward basic residues; sequence SSKKKSRSKGHRY.

This sequence belongs to the UPF0329 family.

In Encephalitozoon cuniculi (strain GB-M1) (Microsporidian parasite), this protein is UPF0329 protein ECU03_0090.